A 220-amino-acid polypeptide reads, in one-letter code: Endonuclease NucS (220 aa).

Belongs to the NucS endonuclease family.

Its subcellular location is the cytoplasm. Functionally, cleaves both 3' and 5' ssDNA extremities of branched DNA structures. This chain is Endonuclease NucS, found in Frankia alni (strain DSM 45986 / CECT 9034 / ACN14a).